The primary structure comprises 96 residues: Antitoxin TacA3 (96 aa).

The tract at residues 61–96 is neutralization domain; that stretch reads YLTERDTKMIMEILDNPPAPNEKLLAAAFALPDMKK.

It belongs to the TacA antitoxin family. Forms a complex with cognate toxin TacT3. Forms a 4:2 antitoxin:toxin complex with cognate toxin TacT3. Forms a 4:4 antitoxin:toxin complex with promoter DNA, where 2 TacT3 dimers bridge 2 TacA3 dimers. Only TacA3 contacts promoter DNA.

Functionally, antitoxin component of a type II toxin-antitoxin (TA) system. Counteracts the toxic effect of cognate toxin TacT3, but not TacT1 or TacT2. Plays a role in persister cell formation. In terms of biological role, the TacA3-TacT3 complex both represses and derepresses expression of its own operon. The hexameric 4:2 TacA3-TacT3 complex binds promoter DNA and represses its transcription; both subunits are required. The octomeric 4:4 TacA3-TacT3 complex derepresses the operon. The shift from hexameric to octomeric complex probably alters DNA-binding, leading to dissociation from the operator DNA and derepression. Does not bind the promoter of the TacA1-TacT1 operon. This is Antitoxin TacA3 from Salmonella typhimurium (strain 14028s / SGSC 2262).